Here is a 490-residue protein sequence, read N- to C-terminus: MSRMAEQQLYIHGGYTSATSGRTFETINPANGNVLATVQAAGREDVDRAVKSAQQGQKIWAAMTAMERSRILRRAVDILRERNDELAKLETLDTGKAYSETSTVDIVTGADVLEYYAGLIPALEGSQIPLRETSFVYTRREPLGVVAGIGAWNYPIQIALWKSAPALAAGNAMIFKPSEVTPLTALKLAEIYSEAGLPDGVFNVLPGVGAETGQYLTEHPGIAKVSFTGGVASGKKVMANSAASSLKEVTMELGGKSPLIVFDDADLDLAADIAMMANFFSSGQVCTNGTRVFVPAKCKAAFEQKILARVERIRAGDVFDPQTNFGPLVSFPHRDNVLRYIAKGKEEGARVLCGGDVLKGDGFDNGAWVAPTVFTDCRDEMTIVREEIFGPVMSLLTYESEDEVIRRANDTDYGLAAGIVTADLNLAHRVIHQLEAGICWINTWGESPAEMPVGGYKHSGIGRENGVMTLQSYTQVKSIQVEMAKFQSIF.

K(+)-binding residues include Thr26, Ile27, and Asp93. 150-152 (GAW) lines the NAD(+) pocket. Lys162 acts as the Charge relay system in catalysis. 176 to 179 (KPSE) serves as a coordination point for NAD(+). Val180 is a K(+) binding site. An NAD(+)-binding site is contributed by 230 to 233 (GVAS). Leu246 is a K(+) binding site. Residue Glu252 is the Proton acceptor of the active site. Residues Gly254, Cys286, and Glu387 each coordinate NAD(+). Catalysis depends on Cys286, which acts as the Nucleophile. The residue at position 286 (Cys286) is a Cysteine sulfenic acid (-SOH). Residues Lys457 and Gly460 each coordinate K(+). The active-site Charge relay system is Glu464.

It belongs to the aldehyde dehydrogenase family. Dimer of dimers. Requires K(+) as cofactor.

It catalyses the reaction betaine aldehyde + NAD(+) + H2O = glycine betaine + NADH + 2 H(+). It functions in the pathway amine and polyamine biosynthesis; betaine biosynthesis via choline pathway; betaine from betaine aldehyde: step 1/1. Its function is as follows. Involved in the biosynthesis of the osmoprotectant glycine betaine. Catalyzes the irreversible oxidation of betaine aldehyde to the corresponding acid. The sequence is that of Betaine aldehyde dehydrogenase from Escherichia coli (strain SMS-3-5 / SECEC).